Reading from the N-terminus, the 477-residue chain is Methylenetetrahydrofolate--tRNA-(uracil-5-)-methyltransferase TrmFO (477 aa).

Position 15 to 20 (15 to 20 (GAGLAG)) interacts with FAD.

The protein belongs to the MnmG family. TrmFO subfamily. FAD serves as cofactor.

The protein resides in the cytoplasm. The enzyme catalyses uridine(54) in tRNA + (6R)-5,10-methylene-5,6,7,8-tetrahydrofolate + NADH + H(+) = 5-methyluridine(54) in tRNA + (6S)-5,6,7,8-tetrahydrofolate + NAD(+). The catalysed reaction is uridine(54) in tRNA + (6R)-5,10-methylene-5,6,7,8-tetrahydrofolate + NADPH + H(+) = 5-methyluridine(54) in tRNA + (6S)-5,6,7,8-tetrahydrofolate + NADP(+). Functionally, catalyzes the folate-dependent formation of 5-methyl-uridine at position 54 (M-5-U54) in all tRNAs. The protein is Methylenetetrahydrofolate--tRNA-(uracil-5-)-methyltransferase TrmFO of Nitrobacter hamburgensis (strain DSM 10229 / NCIMB 13809 / X14).